Reading from the N-terminus, the 403-residue chain is Phosphopentomutase (403 aa).

The Mn(2+) site is built by Asp13, Asp298, His303, Asp339, His340, and His351.

This sequence belongs to the phosphopentomutase family. It depends on Mn(2+) as a cofactor.

It is found in the cytoplasm. It carries out the reaction 2-deoxy-alpha-D-ribose 1-phosphate = 2-deoxy-D-ribose 5-phosphate. It catalyses the reaction alpha-D-ribose 1-phosphate = D-ribose 5-phosphate. Its pathway is carbohydrate degradation; 2-deoxy-D-ribose 1-phosphate degradation; D-glyceraldehyde 3-phosphate and acetaldehyde from 2-deoxy-alpha-D-ribose 1-phosphate: step 1/2. In terms of biological role, isomerase that catalyzes the conversion of deoxy-ribose 1-phosphate (dRib-1-P) and ribose 1-phosphate (Rib-1-P) to deoxy-ribose 5-phosphate (dRib-5-P) and ribose 5-phosphate (Rib-5-P), respectively. The protein is Phosphopentomutase of Streptococcus pneumoniae serotype 4 (strain ATCC BAA-334 / TIGR4).